A 209-amino-acid polypeptide reads, in one-letter code: Large ribosomal subunit protein uL3 (209 aa).

This sequence belongs to the universal ribosomal protein uL3 family. As to quaternary structure, part of the 50S ribosomal subunit. Forms a cluster with proteins L14 and L19.

One of the primary rRNA binding proteins, it binds directly near the 3'-end of the 23S rRNA, where it nucleates assembly of the 50S subunit. The chain is Large ribosomal subunit protein uL3 from Pelobacter propionicus (strain DSM 2379 / NBRC 103807 / OttBd1).